Reading from the N-terminus, the 246-residue chain is NH(3)-dependent NAD(+) synthetase (246 aa).

29-36 (GLSGGIDS) lines the ATP pocket. Residue aspartate 35 participates in Mg(2+) binding. Arginine 110 is a deamido-NAD(+) binding site. An ATP-binding site is contributed by threonine 130. Residue glutamate 135 participates in Mg(2+) binding. The ATP site is built by lysine 159 and serine 181.

Belongs to the NAD synthetase family. As to quaternary structure, homodimer.

It catalyses the reaction deamido-NAD(+) + NH4(+) + ATP = AMP + diphosphate + NAD(+) + H(+). Its pathway is cofactor biosynthesis; NAD(+) biosynthesis; NAD(+) from deamido-NAD(+) (ammonia route): step 1/1. In terms of biological role, catalyzes the ATP-dependent amidation of deamido-NAD to form NAD. Uses ammonia as a nitrogen source. The protein is NH(3)-dependent NAD(+) synthetase of Campylobacter jejuni subsp. doylei (strain ATCC BAA-1458 / RM4099 / 269.97).